A 214-amino-acid chain; its full sequence is MKYELSAKEARVIGCLLEKQVTTPDQYPLSLNGIQLACNQKTNREPVMELTESEVQQILDLLLKKHFLRTLSGFGNRVVKYEHRFCNSEFGQLKLSAAEVAVVATLLLRGAQTPGELRTRTNRMHEFNDVSEVEQVLTNLSAREDGPFVVRLAREPGKRESRFMHLFCGQIDEAPAEAALENDTELTQRVSVLENEVAQLKQQLQALLERGTHD.

This sequence belongs to the UPF0502 family.

The sequence is that of UPF0502 protein Spro_2794 from Serratia proteamaculans (strain 568).